The sequence spans 1022 residues: Protein translocase subunit SecA (1022 aa).

Residues glutamine 143, 161 to 165, and aspartate 661 contribute to the ATP site; that span reads GEGKT. Residues 973–1001 form a disordered region; that stretch reads AGSILSHESDVPSGTAAQQPIKADVKPGR. 4 residues coordinate Zn(2+): cysteine 1005, cysteine 1007, cysteine 1016, and histidine 1017.

The protein belongs to the SecA family. In terms of assembly, monomer and homodimer. Part of the essential Sec protein translocation apparatus which comprises SecA, SecYEG and auxiliary proteins SecDF. Other proteins may also be involved. Zn(2+) serves as cofactor.

The protein localises to the cell inner membrane. Its subcellular location is the cytoplasm. The catalysed reaction is ATP + H2O + cellular proteinSide 1 = ADP + phosphate + cellular proteinSide 2.. Functionally, part of the Sec protein translocase complex. Interacts with the SecYEG preprotein conducting channel. Has a central role in coupling the hydrolysis of ATP to the transfer of proteins into and across the cell membrane, serving as an ATP-driven molecular motor driving the stepwise translocation of polypeptide chains across the membrane. The polypeptide is Protein translocase subunit SecA (Chlorobium phaeobacteroides (strain DSM 266 / SMG 266 / 2430)).